A 543-amino-acid polypeptide reads, in one-letter code: Chaperonin GroEL (543 aa).

Residues 29-32 (TLGP), 86-90 (DGTTT), Gly-413, 476-478 (NAA), and Asp-492 contribute to the ATP site.

This sequence belongs to the chaperonin (HSP60) family. In terms of assembly, forms a cylinder of 14 subunits composed of two heptameric rings stacked back-to-back. Interacts with the co-chaperonin GroES.

Its subcellular location is the cytoplasm. The catalysed reaction is ATP + H2O + a folded polypeptide = ADP + phosphate + an unfolded polypeptide.. Functionally, together with its co-chaperonin GroES, plays an essential role in assisting protein folding. The GroEL-GroES system forms a nano-cage that allows encapsulation of the non-native substrate proteins and provides a physical environment optimized to promote and accelerate protein folding. The protein is Chaperonin GroEL of Streptococcus pyogenes serotype M3 (strain SSI-1).